The primary structure comprises 441 residues: Glutamyl-tRNA reductase (441 aa).

Substrate contacts are provided by residues 49-52, serine 109, 114-116, and glutamine 120; these read TCNR and EGQ. Cysteine 50 functions as the Nucleophile in the catalytic mechanism. An NADP(+)-binding site is contributed by 198–203; it reads GAGRMS.

It belongs to the glutamyl-tRNA reductase family. As to quaternary structure, homodimer.

It catalyses the reaction (S)-4-amino-5-oxopentanoate + tRNA(Glu) + NADP(+) = L-glutamyl-tRNA(Glu) + NADPH + H(+). It functions in the pathway porphyrin-containing compound metabolism; protoporphyrin-IX biosynthesis; 5-aminolevulinate from L-glutamyl-tRNA(Glu): step 1/2. Its pathway is porphyrin-containing compound metabolism; chlorophyll biosynthesis. Its function is as follows. Catalyzes the NADPH-dependent reduction of glutamyl-tRNA(Glu) to glutamate 1-semialdehyde (GSA). This chain is Glutamyl-tRNA reductase, found in Prochlorococcus marinus (strain NATL2A).